We begin with the raw amino-acid sequence, 452 residues long: Exodeoxyribonuclease 7 large subunit (452 aa).

It belongs to the XseA family. In terms of assembly, heterooligomer composed of large and small subunits.

The protein resides in the cytoplasm. The catalysed reaction is Exonucleolytic cleavage in either 5'- to 3'- or 3'- to 5'-direction to yield nucleoside 5'-phosphates.. Functionally, bidirectionally degrades single-stranded DNA into large acid-insoluble oligonucleotides, which are then degraded further into small acid-soluble oligonucleotides. The polypeptide is Exodeoxyribonuclease 7 large subunit (Bacillus cereus (strain B4264)).